Reading from the N-terminus, the 118-residue chain is Putative pterin-4-alpha-carbinolamine dehydratase (118 aa).

Belongs to the pterin-4-alpha-carbinolamine dehydratase family.

The catalysed reaction is (4aS,6R)-4a-hydroxy-L-erythro-5,6,7,8-tetrahydrobiopterin = (6R)-L-erythro-6,7-dihydrobiopterin + H2O. The protein is Putative pterin-4-alpha-carbinolamine dehydratase of Xanthomonas euvesicatoria pv. vesicatoria (strain 85-10) (Xanthomonas campestris pv. vesicatoria).